A 594-amino-acid polypeptide reads, in one-letter code: Potassium-transporting ATPase potassium-binding subunit (594 aa).

The next 12 helical transmembrane spans lie at 4 to 24, 65 to 85, 136 to 156, 179 to 199, 287 to 307, 314 to 334, 361 to 381, 390 to 410, 413 to 433, 450 to 470, 518 to 538, and 560 to 580; these read QFFG…PFLG, QYAV…YALQ, ALTV…FALI, LYVL…QGVI, LEML…GEMV, VAIL…TQNA, FGVA…CGAV, AMGG…FGGV, GLYG…LMIG, MVSI…ALAV, LLGL…LALA, and LFIV…YVPA.

Belongs to the KdpA family. In terms of assembly, the system is composed of three essential subunits: KdpA, KdpB and KdpC.

The protein localises to the cell inner membrane. Part of the high-affinity ATP-driven potassium transport (or Kdp) system, which catalyzes the hydrolysis of ATP coupled with the electrogenic transport of potassium into the cytoplasm. This subunit binds the periplasmic potassium ions and delivers the ions to the membrane domain of KdpB through an intramembrane tunnel. In Bordetella avium (strain 197N), this protein is Potassium-transporting ATPase potassium-binding subunit.